The primary structure comprises 440 residues: MSEFSQTVPELVAWARKNDFSITLPTERLAFLMAIAALNGERLDGEMSEGELVDAFRHVSKGFEQTTETVTVRANNAINDMVRQRLLNRFTSELADGNAIYRLTPLGIGITDYYIRQREFSTLRLSMQLSIVAQELQRAAEAAEEGGDEFHWHRNVFAPLKYSVAEIFDSIDMTQRLMDEQQHSVKEDIAALLNQDWRAAIASCEMLLSETSGTLRELQDTLEAAGDKLQANLLRIQEATIGNAGLDLVDKLVFDLQSKLDRIISWGQQAIDLWIGYDRHVHKFIRTAIDMDKNRVFAQRLRQSVQHYFDNPWTLTHANADRLLDMRDEELALRSEEVTGELPPDLEFEEFNAIREQLTAMIEQALLVYQQQQIPLNLGEVMRDYLAQYPRARHFDVARILVDQAVRLGVAEADFSGLPAEWLAINDYGAKVQAHVINKY.

The segment at 208-236 (LSETSGTLRELQDTLEAAGDKLQANLLRI) is leucine-zipper.

The protein belongs to the MukF family. Interacts, and probably forms a ternary complex, with MukE and MukB via its C-terminal region. The complex formation is stimulated by calcium or magnesium. It is required for an interaction between MukE and MukB.

It localises to the cytoplasm. It is found in the nucleoid. Its function is as follows. Involved in chromosome condensation, segregation and cell cycle progression. May participate in facilitating chromosome segregation by condensation DNA from both sides of a centrally located replisome during cell division. Not required for mini-F plasmid partitioning. Probably acts via its interaction with MukB and MukE. Overexpression results in anucleate cells. It has a calcium binding activity. This is Chromosome partition protein MukF from Yersinia pestis.